Consider the following 298-residue polypeptide: MDKGTSFFTTPSFSATTRAIFNTMPQWFSFAVGLLIAYPLLINSLRYRRLKQLQKKFYFPTRESMAKMTDEEAFQIQKETAQLEFPFMFVKAGQFALFRTYGIPTISHLLIKTGQFSKPETSFKRYTDTAALIGEMVENSPTSQRAFLSVARTRFLHSGYQASGKILDTDLLYTLALFAVQPVNFIAAFEWRPLSDLERCAIGTFWKSLGDALGISSDILPSGKTGFRDGIHWLEEVDTWSQEYEVKYMVPDAQNRESADQATAVLLYNLPKVFHPVGLQFTSFMMDDRLRKAMLYVE.

The Lumenal segment spans residues 1–24 (MDKGTSFFTTPSFSATTRAIFNTM). The helical transmembrane segment at 25-45 (PQWFSFAVGLLIAYPLLINSL) threads the bilayer. Residues 46-298 (RYRRLKQLQK…RLRKAMLYVE (253 aa)) are Cytoplasmic-facing.

Belongs to the mpaB oxygenase family.

It is found in the endoplasmic reticulum membrane. The catalysed reaction is 4-farnesyl-3,5-dihydroxy-6-methylphthalide + AH2 + 2 O2 = (4E,8E)-10-(4,6-dihydroxy-7-methyl-3-oxo-1,3-dihydro-2-benzofuran-5-yl)-4,8-dimethyldeca-4,8-dienoate + acetone + A + H2O + H(+). Its pathway is secondary metabolite biosynthesis; terpenoid biosynthesis. Its function is as follows. ER-bound oxygenase; part of the gene cluster that mediates the biosynthesis of mycophenolic acid (MPA), the first isolated antibiotic natural product in the world obtained from a culture of Penicillium brevicompactum in 1893. MpaB catalyzes the oxidative cleavage the C19-C20 double bond in farnesyl-DHMP (FDHMP) to yield FDHMP-3C via a mycophenolic aldehyde intermediate. The first step of the pathway is the synthesis of 5-methylorsellinic acid (5MOA) by the cytosolic polyketide synthase mpaC. 5MOA is then converted to the phthalide compound 5,7-dihydroxy-4,6-dimethylphthalide (DHMP) by the endoplasmic reticulum-bound cytochrome P450 monooxygenase mpaDE. MpaDE first catalyzes hydroxylation of 5-MOA to 4,6-dihydroxy-2-(hydroxymethyl)-3-methylbenzoic acid (DHMB). MpaDE then acts as a lactone synthase that catalyzes the ring closure to convert DHMB into DHMP. The next step is the prenylation of DHMP by the Golgi apparatus-associated prenyltransferase mpaA to yield farnesyl-DHMP (FDHMP). The ER-bound oxygenase mpaB then mediates the oxidative cleavage the C19-C20 double bond in FDHMP to yield FDHMP-3C via a mycophenolic aldehyde intermediate. The O-methyltransferase mpaG catalyzes the methylation of FDHMP-3C to yield MFDHMP-3C. After the cytosolic methylation of FDHMP-3C, MFDHMP-3C enters into peroxisomes probably via free diffusion due to its low molecular weight. Upon a peroxisomal CoA ligation reaction, catalyzed by a beta-oxidation component enzyme acyl-CoA ligase ACL891, MFDHMP-3C-CoA would then be restricted to peroxisomes for the following beta-oxidation pathway steps. The peroxisomal beta-oxidation machinery than converts MFDHMP-3C-CoA into MPA_CoA, via a beta-oxidation chain-shortening process. Finally mpaH acts as a peroxisomal acyl-CoA hydrolase with high substrate specificity toward MPA-CoA to release the final product MPA. The protein is ER-bound oxygenase mpaB of Penicillium roqueforti (strain FM164).